The chain runs to 91 residues: Probable Fe(2+)-trafficking protein (91 aa).

It belongs to the Fe(2+)-trafficking protein family.

Its function is as follows. Could be a mediator in iron transactions between iron acquisition and iron-requiring processes, such as synthesis and/or repair of Fe-S clusters in biosynthetic enzymes. The protein is Probable Fe(2+)-trafficking protein of Acidobacterium capsulatum (strain ATCC 51196 / DSM 11244 / BCRC 80197 / JCM 7670 / NBRC 15755 / NCIMB 13165 / 161).